A 208-amino-acid polypeptide reads, in one-letter code: FMN-dependent NADH:quinone oxidoreductase 1 (208 aa).

Residues Ser10, 15–17 (SES), and 97–100 (MWNF) contribute to the FMN site.

Belongs to the azoreductase type 1 family. In terms of assembly, homodimer. The cofactor is FMN.

The enzyme catalyses 2 a quinone + NADH + H(+) = 2 a 1,4-benzosemiquinone + NAD(+). It carries out the reaction N,N-dimethyl-1,4-phenylenediamine + anthranilate + 2 NAD(+) = 2-(4-dimethylaminophenyl)diazenylbenzoate + 2 NADH + 2 H(+). Functionally, quinone reductase that provides resistance to thiol-specific stress caused by electrophilic quinones. In terms of biological role, also exhibits azoreductase activity. Catalyzes the reductive cleavage of the azo bond in aromatic azo compounds to the corresponding amines. The protein is FMN-dependent NADH:quinone oxidoreductase 1 of Bradyrhizobium diazoefficiens (strain JCM 10833 / BCRC 13528 / IAM 13628 / NBRC 14792 / USDA 110).